The following is a 146-amino-acid chain: Large ribosomal subunit protein bL9 (146 aa).

This sequence belongs to the bacterial ribosomal protein bL9 family. Part of the 50S ribosomal subunit. Contacts protein L31.

Functionally, binds to the 23S rRNA and protein L31. In Deinococcus radiodurans (strain ATCC 13939 / DSM 20539 / JCM 16871 / CCUG 27074 / LMG 4051 / NBRC 15346 / NCIMB 9279 / VKM B-1422 / R1), this protein is Large ribosomal subunit protein bL9 (rplI).